Here is a 64-residue protein sequence, read N- to C-terminus: DNA-binding protein 7b (64 aa).

2 positions are modified to N6-methyllysine: Lys-5 and Lys-7.

The protein belongs to the 7 kDa DNA-binding/endoribonuclease P2 family. Monomer. Post-translationally, lys-5 and Lys-7 may be methylated.

The protein localises to the cytoplasm. Functionally, can constrain negative DNA supercoils. May be involved in maintaining the integrity of the genome at high temperature. The sequence is that of DNA-binding protein 7b from Saccharolobus shibatae (strain ATCC 51178 / DSM 5389 / JCM 8931 / NBRC 15437 / B12) (Sulfolobus shibatae).